The primary structure comprises 664 residues: Ent-copalyl diphosphate synthase 5 (664 aa).

Lys101 is a substrate binding site. Residues Asp233 and Asp235 each contribute to the Mg(2+) site. A DXDD motif motif is present at residues 233–236 (DIDD). Lys320 contributes to the substrate binding site.

This sequence belongs to the terpene synthase family. Tpsc subfamily. The cofactor is Mg(2+). In terms of tissue distribution, ubiquitous expression in roots, stems, leaves and flowers.

It is found in the plastid. The protein resides in the chloroplast. It carries out the reaction (2E,6E,10E)-geranylgeranyl diphosphate = ent-copalyl diphosphate. It functions in the pathway secondary metabolite biosynthesis; terpenoid biosynthesis. Its function is as follows. Involved in the biosynthesis of ent-kaurene diterpenoids natural products such as oridonin, miltiradiene, eriocalyxin B and nezukol, known to exhibit antitumor, anti-inflammatory and antibacterial activities. Catalyzes the conversion of (2E,6E,10E)-geranylgeranyl diphosphate (GGPP) to ent-copalyl diphosphate (ent-CPP). The sequence is that of Ent-copalyl diphosphate synthase 5 from Isodon rubescens (Rabdosia rubescens).